Reading from the N-terminus, the 425-residue chain is Gamma-glutamyl phosphate reductase (425 aa).

The protein belongs to the gamma-glutamyl phosphate reductase family.

Its subcellular location is the cytoplasm. The catalysed reaction is L-glutamate 5-semialdehyde + phosphate + NADP(+) = L-glutamyl 5-phosphate + NADPH + H(+). Its pathway is amino-acid biosynthesis; L-proline biosynthesis; L-glutamate 5-semialdehyde from L-glutamate: step 2/2. Catalyzes the NADPH-dependent reduction of L-glutamate 5-phosphate into L-glutamate 5-semialdehyde and phosphate. The product spontaneously undergoes cyclization to form 1-pyrroline-5-carboxylate. This is Gamma-glutamyl phosphate reductase from Symbiobacterium thermophilum (strain DSM 24528 / JCM 14929 / IAM 14863 / T).